A 455-amino-acid polypeptide reads, in one-letter code: Probable glycine dehydrogenase (decarboxylating) subunit 1 (455 aa).

The protein belongs to the GcvP family. N-terminal subunit subfamily. As to quaternary structure, the glycine cleavage system is composed of four proteins: P, T, L and H. In this organism, the P 'protein' is a heterodimer of two subunits.

The catalysed reaction is N(6)-[(R)-lipoyl]-L-lysyl-[glycine-cleavage complex H protein] + glycine + H(+) = N(6)-[(R)-S(8)-aminomethyldihydrolipoyl]-L-lysyl-[glycine-cleavage complex H protein] + CO2. Functionally, the glycine cleavage system catalyzes the degradation of glycine. The P protein binds the alpha-amino group of glycine through its pyridoxal phosphate cofactor; CO(2) is released and the remaining methylamine moiety is then transferred to the lipoamide cofactor of the H protein. The polypeptide is Probable glycine dehydrogenase (decarboxylating) subunit 1 (Saccharolobus islandicus (strain M.16.27) (Sulfolobus islandicus)).